Here is a 509-residue protein sequence, read N- to C-terminus: Glycerol kinase (509 aa).

Thr-17 contributes to the ADP binding site. Residues Thr-17, Thr-18, and Ser-19 each contribute to the ATP site. Residue Thr-17 participates in sn-glycerol 3-phosphate binding. Position 21 (Arg-21) interacts with ADP. 4 residues coordinate sn-glycerol 3-phosphate: Arg-87, Glu-88, Tyr-139, and Asp-256. Residues Arg-87, Glu-88, Tyr-139, Asp-256, and Gln-257 each coordinate glycerol. Thr-278 and Gly-322 together coordinate ADP. Residues Thr-278, Gly-322, Gln-326, and Ala-423 each contribute to the ATP site. 2 residues coordinate ADP: Ala-423 and Asn-427.

Belongs to the FGGY kinase family.

It carries out the reaction glycerol + ATP = sn-glycerol 3-phosphate + ADP + H(+). It participates in polyol metabolism; glycerol degradation via glycerol kinase pathway; sn-glycerol 3-phosphate from glycerol: step 1/1. Inhibited by fructose 1,6-bisphosphate (FBP). Key enzyme in the regulation of glycerol uptake and metabolism. Catalyzes the phosphorylation of glycerol to yield sn-glycerol 3-phosphate. This is Glycerol kinase from Corynebacterium glutamicum (strain R).